The chain runs to 428 residues: Enolase (428 aa).

Glutamine 163 contributes to the (2R)-2-phosphoglycerate binding site. Residue glutamate 205 is the Proton donor of the active site. Mg(2+) contacts are provided by aspartate 242, glutamate 283, and aspartate 310. Lysine 335, arginine 364, serine 365, and lysine 386 together coordinate (2R)-2-phosphoglycerate. The active-site Proton acceptor is the lysine 335.

The protein belongs to the enolase family. Mg(2+) is required as a cofactor.

The protein resides in the cytoplasm. Its subcellular location is the secreted. It localises to the cell surface. The enzyme catalyses (2R)-2-phosphoglycerate = phosphoenolpyruvate + H2O. The protein operates within carbohydrate degradation; glycolysis; pyruvate from D-glyceraldehyde 3-phosphate: step 4/5. Catalyzes the reversible conversion of 2-phosphoglycerate (2-PG) into phosphoenolpyruvate (PEP). It is essential for the degradation of carbohydrates via glycolysis. This is Enolase from Saccharopolyspora erythraea (strain ATCC 11635 / DSM 40517 / JCM 4748 / NBRC 13426 / NCIMB 8594 / NRRL 2338).